Here is a 579-residue protein sequence, read N- to C-terminus: Pre-mRNA-processing protein 45 (579 aa).

4 disordered regions span residues 1–64 (MTSV…GWRP), 218–254 (QQDP…LTAE), 343–414 (QKAR…TERR), and 521–579 (AAEA…VDDD). Over residues 234–245 (RGPPSPPPPIMH) the composition is skewed to pro residues. Over residues 343–359 (QKAREERAASNRRDSRA) the composition is skewed to basic and acidic residues. Residues 366-379 (ASRSPSAYSRSATP) are compositionally biased toward low complexity. Composition is skewed to basic and acidic residues over residues 386 to 414 (ARER…TERR), 521 to 538 (AAEA…KDTT), and 563 to 579 (EVER…VDDD).

It belongs to the SNW family. Associated with the spliceosome.

The protein resides in the nucleus. Involved in pre-mRNA splicing. The polypeptide is Pre-mRNA-processing protein 45 (prp45) (Aspergillus fumigatus (strain ATCC MYA-4609 / CBS 101355 / FGSC A1100 / Af293) (Neosartorya fumigata)).